The following is a 261-amino-acid chain: ATP synthase subunit a (261 aa).

Transmembrane regions (helical) follow at residues 28–48 (AVHLDSLGWSVFLGLVFLTIF), 89–109 (IAPLSLTIFVWILLMNSMDWV), 140–160 (NITFGLALGVFILIIYYSIKV), 203–223 (LFGNLYAGELIFLLIATIGVF), and 229–249 (FLWAAFHLLVIPLQAFIFMML).

This sequence belongs to the ATPase A chain family. In terms of assembly, F-type ATPases have 2 components, CF(1) - the catalytic core - and CF(0) - the membrane proton channel. CF(1) has five subunits: alpha(3), beta(3), gamma(1), delta(1), epsilon(1). CF(0) has three main subunits: a(1), b(2) and c(9-12). The alpha and beta chains form an alternating ring which encloses part of the gamma chain. CF(1) is attached to CF(0) by a central stalk formed by the gamma and epsilon chains, while a peripheral stalk is formed by the delta and b chains.

The protein localises to the cell inner membrane. Its function is as follows. Key component of the proton channel; it plays a direct role in the translocation of protons across the membrane. The chain is ATP synthase subunit a from Colwellia psychrerythraea (strain 34H / ATCC BAA-681) (Vibrio psychroerythus).